The primary structure comprises 112 residues: MQDTGSVVPLHWFGFGYAALVASGGIIGYAKAGSVPSLAAGLLFGSLASLGAYQLSQDPRNVWVFLATSGTLAGIMGMRFYHSGKFMPAGLIAGASLLMVAKVGVSMFNRPH.

Transmembrane regions (helical) follow at residues 7-27, 32-52, 62-82, and 86-106; these read VVPL…GGII, AGSV…SLGA, VWVF…RFYH, and FMPA…VGVS.

The protein belongs to the TMEM14 family.

It is found in the mitochondrion membrane. Its function is as follows. Required for normal heme biosynthesis. This chain is Transmembrane protein 14C (TMEM14C), found in Pongo abelii (Sumatran orangutan).